The primary structure comprises 220 residues: Deoxyribose-phosphate aldolase (220 aa).

Asp89 functions as the Proton donor/acceptor in the catalytic mechanism. The active-site Schiff-base intermediate with acetaldehyde is Lys151. The active-site Proton donor/acceptor is Lys180.

The protein belongs to the DeoC/FbaB aldolase family. DeoC type 1 subfamily.

Its subcellular location is the cytoplasm. It catalyses the reaction 2-deoxy-D-ribose 5-phosphate = D-glyceraldehyde 3-phosphate + acetaldehyde. Its pathway is carbohydrate degradation; 2-deoxy-D-ribose 1-phosphate degradation; D-glyceraldehyde 3-phosphate and acetaldehyde from 2-deoxy-alpha-D-ribose 1-phosphate: step 2/2. In terms of biological role, catalyzes a reversible aldol reaction between acetaldehyde and D-glyceraldehyde 3-phosphate to generate 2-deoxy-D-ribose 5-phosphate. The chain is Deoxyribose-phosphate aldolase from Streptococcus pneumoniae (strain Taiwan19F-14).